A 337-amino-acid chain; its full sequence is MAKVKVGINGFGRIGRLVARVILQRDDCELVAVNDPFISTDYMTYMFKYDSVHGQCKSHEIKLKDEKTLLFGETPVAVFGCRNPEEIPWGQAGADFVVESTGVFTDKDKAAAHLKGGAKKVVISAPSKDAPMFVVGVNEHEYKSDLNIVSNASCTTNCLAPLAKVINDRFGIVEGLMTTVHAMTATQKTVDGPSMKDWRGGRAASFNIIPSSTGAAKAVGKVLPALNGKLTGMAFRVPTCDVSVVDLTVRIEKAASYEQIKAAIKEESEGKLKGILGYTEDDLVSTDFIGDNRSSIFDAKAGISLNDNFVKLVSWYDNEWGYSTRVVDLIMHISKCQ.

A binding to NAD region spans residues 1–151 (MAKVKVGING…YKSDLNIVSN (151 aa)). Residues 13-14 (RI), aspartate 35, and arginine 82 each bind NAD(+). The interval 152 to 337 (ASCTTNCLAP…DLIMHISKCQ (186 aa)) is catalytic. D-glyceraldehyde 3-phosphate-binding positions include 153–155 (SCT), threonine 184, 213–214 (TG), and arginine 236. Catalysis depends on cysteine 154, which acts as the Nucleophile. Asparagine 318 serves as a coordination point for NAD(+).

The protein belongs to the glyceraldehyde-3-phosphate dehydrogenase family. Homotetramer.

The protein resides in the cytoplasm. The catalysed reaction is D-glyceraldehyde 3-phosphate + phosphate + NAD(+) = (2R)-3-phospho-glyceroyl phosphate + NADH + H(+). It participates in carbohydrate degradation; glycolysis; pyruvate from D-glyceraldehyde 3-phosphate: step 1/5. Key enzyme in glycolysis that catalyzes the first step of the pathway by converting D-glyceraldehyde 3-phosphate (G3P) into 3-phospho-D-glyceroyl phosphate. Essential for the maintenance of cellular ATP levels and carbohydrate metabolism. This chain is Glyceraldehyde-3-phosphate dehydrogenase, cytosolic (GAPC), found in Mesembryanthemum crystallinum (Common ice plant).